The primary structure comprises 383 residues: Galactokinase (383 aa).

34–37 (EHTD) contributes to the substrate binding site. 124–130 (GAGLSSS) is a binding site for ATP. Mg(2+) contacts are provided by Ser-130 and Glu-162. Asp-174 (proton acceptor) is an active-site residue. Tyr-223 contributes to the substrate binding site.

Belongs to the GHMP kinase family. GalK subfamily.

The protein localises to the cytoplasm. The catalysed reaction is alpha-D-galactose + ATP = alpha-D-galactose 1-phosphate + ADP + H(+). It functions in the pathway carbohydrate metabolism; galactose metabolism. Catalyzes the transfer of the gamma-phosphate of ATP to D-galactose to form alpha-D-galactose-1-phosphate (Gal-1-P). The polypeptide is Galactokinase (Yersinia enterocolitica serotype O:8 / biotype 1B (strain NCTC 13174 / 8081)).